A 615-amino-acid chain; its full sequence is DNA mismatch repair protein MutL (615 aa).

It belongs to the DNA mismatch repair MutL/HexB family.

Functionally, this protein is involved in the repair of mismatches in DNA. It is required for dam-dependent methyl-directed DNA mismatch repair. May act as a 'molecular matchmaker', a protein that promotes the formation of a stable complex between two or more DNA-binding proteins in an ATP-dependent manner without itself being part of a final effector complex. In Histophilus somni (strain 2336) (Haemophilus somnus), this protein is DNA mismatch repair protein MutL.